Consider the following 299-residue polypeptide: Prohibitin-2 (299 aa).

Residue Ala-2 is modified to N-acetylalanine. The necessary for transcriptional repression stretch occupies residues 19–49; that stretch reads MGTALKLLLGAGAVAYGVRESVFTVEGGHRA. Tyr-128 is subject to Phosphotyrosine. N6-acetyllysine is present on Lys-147. The interval 150 to 174 is necessary for transcriptional repression; sequence ASQLITQRAQVSLLIRRELTERAKD. Ser-151 is subject to Phosphoserine. A coiled-coil region spans residues 190 to 238; that stretch reads SREYTAAVEAKQVAQQEAQRAQFLVEKAKQEQRQKIVQAEGEAEAAKML. Lys-200, Lys-236, Lys-250, and Lys-262 each carry N6-acetyllysine.

The protein belongs to the prohibitin family. In terms of assembly, the mitochondrial prohibitin complex consists of two subunits (PHB1 and PHB2), assembled into a membrane-associated ring-shaped supercomplex of approximately 1 mDa. Interacts with ESR1, HDAC1 and HDAC5. Interacts with ZNF703. Interacts with STOML2. Interacts with ARFGEF3. Interacts with SPHK2. Interacts with COX4I1; the interaction associates PHB2 with COX. Interacts with MAP1LC3B (membrane-bound form LC3-II); the interaction is direct and upon mitochondrial depolarization and proteasome-dependent outer membrane rupture. Interacts with IGFBP6 (via C-terminal domain). Interacts with CLPB. Interacts with CD86 (via cytoplasmic domain); the interactions increases after priming with CD40. Interacts with AFG3L2. Interacts with DNAJC19. Interacts with AKT2; this interaction may be important for myogenic differentiation. Post-translationally, phosphorylated. Tyrosine phosphorylation is indirectly stimulated by IGFBP6. Widely expressed in different tissues.

It is found in the mitochondrion inner membrane. Its subcellular location is the cytoplasm. The protein resides in the nucleus. It localises to the cell membrane. Its function is as follows. Protein with pleiotropic attributes mediated in a cell-compartment- and tissue-specific manner, which include the plasma membrane-associated cell signaling functions, mitochondrial chaperone, and transcriptional co-regulator of transcription factors and sex steroid hormones in the nucleus. In the mitochondria, together with PHB, forms large ring complexes (prohibitin complexes) in the inner mitochondrial membrane (IMM) and functions as a chaperone protein that stabilizes mitochondrial respiratory enzymes and maintains mitochondrial integrity in the IMM, which is required for mitochondrial morphogenesis, neuronal survival, and normal lifespan. The prohibitin complex, with DNAJC19, regulates cardiolipin remodeling and the protein turnover of OMA1 in a cardiolipin-binding manner. Also regulates cytochrome-c oxidase assembly (COX) and mitochondrial respiration. Binding to sphingoid 1-phosphate (SPP) modulates its regulator activity. Has a key role of mitophagy receptor involved in targeting mitochondria for autophagic degradation. Involved in mitochondrial-mediated antiviral innate immunity, activates RIG-I-mediated signal transduction and production of IFNB1 and pro-inflammatory cytokine IL6. Functionally, in the nucleus, serves as transcriptional co-regulator. Acts as a mediator of transcriptional repression by nuclear hormone receptors via recruitment of histone deacetylases. Functions as an estrogen receptor (ER)-selective coregulator that potentiates the inhibitory activities of antiestrogens and represses the activity of estrogens. Competes with NCOA1 for modulation of ER transcriptional activity. In terms of biological role, in the plasma membrane, is involved in IGFBP6-induced cell migration. Cooperates with CD86 to mediate CD86-signaling in B lymphocytes that regulates the level of IgG1 produced through the activation of distal signaling intermediates. Upon CD40 engagement, required to activate NF-kappa-B signaling pathway via phospholipase C and protein kinase C activation. In Mus musculus (Mouse), this protein is Prohibitin-2.